The following is a 329-amino-acid chain: Glycerol-3-phosphate dehydrogenase [NAD(P)+] (329 aa).

NADPH-binding residues include Y14, R34, and K108. The sn-glycerol 3-phosphate site is built by K108, G137, and S139. A141 is an NADPH binding site. 5 residues coordinate sn-glycerol 3-phosphate: K192, D245, S255, R256, and N257. K192 serves as the catalytic Proton acceptor. An NADPH-binding site is contributed by R256. I280 and E282 together coordinate NADPH.

It belongs to the NAD-dependent glycerol-3-phosphate dehydrogenase family.

It localises to the cytoplasm. It catalyses the reaction sn-glycerol 3-phosphate + NAD(+) = dihydroxyacetone phosphate + NADH + H(+). The enzyme catalyses sn-glycerol 3-phosphate + NADP(+) = dihydroxyacetone phosphate + NADPH + H(+). It participates in membrane lipid metabolism; glycerophospholipid metabolism. Functionally, catalyzes the reduction of the glycolytic intermediate dihydroxyacetone phosphate (DHAP) to sn-glycerol 3-phosphate (G3P), the key precursor for phospholipid synthesis. This Wigglesworthia glossinidia brevipalpis protein is Glycerol-3-phosphate dehydrogenase [NAD(P)+].